The sequence spans 240 residues: MKMMDANEIISFIQKSEKKTPVKVYIKGDLKEVTFPETVQAFVNKKSGVLFGEWSEIKTILDENNKHIVDYVVENDRRNSAIPMLDLKGIKARIEPGAIIRDHVEIGDNAVIMMNATINIGAVIGEGSMIDMNAVLGGRATVGKNCHVGAGAVLAGVIEPPSAKPVIVEDDVVIGANVVVLEGVTVGKGAVVAAGAVVTEDVPPYTVVAGTPARVIKEIDEKTKAKTEIKQELRQLNPEK.

This sequence belongs to the transferase hexapeptide repeat family. DapH subfamily.

It catalyses the reaction (S)-2,3,4,5-tetrahydrodipicolinate + acetyl-CoA + H2O = L-2-acetamido-6-oxoheptanedioate + CoA. Its pathway is amino-acid biosynthesis; L-lysine biosynthesis via DAP pathway; LL-2,6-diaminopimelate from (S)-tetrahydrodipicolinate (acetylase route): step 1/3. Catalyzes the transfer of an acetyl group from acetyl-CoA to tetrahydrodipicolinate. The protein is 2,3,4,5-tetrahydropyridine-2,6-dicarboxylate N-acetyltransferase of Bacillus cereus (strain G9842).